The primary structure comprises 343 residues: Uroporphyrinogen decarboxylase (343 aa).

Residues 23 to 27 (RQAGR), D73, Y150, S205, and H322 contribute to the substrate site.

It belongs to the uroporphyrinogen decarboxylase family. As to quaternary structure, homodimer.

The protein localises to the cytoplasm. The enzyme catalyses uroporphyrinogen III + 4 H(+) = coproporphyrinogen III + 4 CO2. Its pathway is porphyrin-containing compound metabolism; protoporphyrin-IX biosynthesis; coproporphyrinogen-III from 5-aminolevulinate: step 4/4. In terms of biological role, catalyzes the decarboxylation of four acetate groups of uroporphyrinogen-III to yield coproporphyrinogen-III. In Cereibacter sphaeroides (strain KD131 / KCTC 12085) (Rhodobacter sphaeroides), this protein is Uroporphyrinogen decarboxylase.